We begin with the raw amino-acid sequence, 278 residues long: Imidazole glycerol phosphate synthase subunit HisF (278 aa).

Catalysis depends on residues D11 and D130.

Belongs to the HisA/HisF family. Heterodimer of HisH and HisF.

The protein resides in the cytoplasm. It carries out the reaction 5-[(5-phospho-1-deoxy-D-ribulos-1-ylimino)methylamino]-1-(5-phospho-beta-D-ribosyl)imidazole-4-carboxamide + L-glutamine = D-erythro-1-(imidazol-4-yl)glycerol 3-phosphate + 5-amino-1-(5-phospho-beta-D-ribosyl)imidazole-4-carboxamide + L-glutamate + H(+). The protein operates within amino-acid biosynthesis; L-histidine biosynthesis; L-histidine from 5-phospho-alpha-D-ribose 1-diphosphate: step 5/9. Functionally, IGPS catalyzes the conversion of PRFAR and glutamine to IGP, AICAR and glutamate. The HisF subunit catalyzes the cyclization activity that produces IGP and AICAR from PRFAR using the ammonia provided by the HisH subunit. This chain is Imidazole glycerol phosphate synthase subunit HisF, found in Thermodesulfovibrio yellowstonii (strain ATCC 51303 / DSM 11347 / YP87).